The following is a 179-amino-acid chain: DELTA-actitoxin-Afr1e (179 aa).

The segment at 1–29 (SADVAGAVIDGAGLGFDVLKTVLEALGNV) is N-terminal alpha-helix that contributes to the pore. The segment at 11–30 (GAGLGFDVLKTVLEALGNVK) is N-terminal region. Arg-31 is an an N-(acyl)-sphingosylphosphocholine binding site. N-acetyl-D-glucosamine 6-sulfate-binding residues include Tyr-51 and Arg-53. An N-(acyl)-sphingosylphosphocholine-binding residues include Arg-53, Ser-54, Arg-79, Gly-85, Tyr-108, Tyr-113, Ser-114, Trp-116, Tyr-133, Tyr-137, Tyr-138, Arg-144, and Gly-168. The tract at residues 105-120 (SVPYDYNWYSNWWNVR) is trp-rich region, which is important for the binding to lipid membrane. Tyr-138 is an N-acetyl-D-glucosamine 6-sulfate binding site. The Cell attachment site, crucial for protein stability signature appears at 144 to 146 (RGD).

The protein belongs to the actinoporin family. Sea anemone subfamily. Octamer or nonamer in membranes. Monomer in the soluble state.

The protein resides in the secreted. It is found in the nematocyst. The protein localises to the target cell membrane. Its function is as follows. Pore-forming toxin (PFT) that consists of a crown-shaped octamer or nonamer that forms cation-selective hydrophilic pores of about 1.5 nm (inside) and 13 nm (outside) and causes cytolysis. It causes cardiac stimulation. Also causes hemolysis (HC(50)=1.6 nM). Interestingly, the Phe-16 is crucial for hemolysis. Pore formation is a multi-step process that involves specific recognition of membrane sphingomyelin (but neither cholesterol nor phosphatidylcholine) using aromatic rich region and adjacent phosphocholine (POC) binding site, firm binding to the membrane (mainly driven by hydrophobic interactions) accompanied by the transfer of the N-terminal region to the lipid-water interface and finally pore formation after oligomerization of monomers. It is probable that a dimeric form is an assembly intermediate before the complete oligomerization. The formation of stable pores occurs only in vesicles composed of DOPC/SM (there is no oligomerization when the PFT is treated with vesicles of DOPC or SM alone). The transmembrane pore displays 8 lateral perforations, one at each subunit-subunit interface, partially occupied by the acyl-chain region of a bridging lipid. Each pore contains 24 lipid molecules, firmly bound to each subunit, that is, 3 lipids (L1, L2, L3, L4 and/or L5) are associated to each subunit. Lipid L1 bridges 2 subunits, whereas lipids L2 and L3 bind to sites at single subunit. This chain is DELTA-actitoxin-Afr1e, found in Actinia fragacea (Strawberry anemone).